The chain runs to 299 residues: MTESNRLRIAIQKSGRLSTDSQQLLKSCGVKFSINEQRLIAHADNMPIDLLRVRDDDIPGLVMDGVVDLGIIGENVLEEEQIERQTLNKPAEYVKLRQLDFGACRLSLAVPTEFSYADASSLEGLRIATSYPNLLRRFMQQKSINYRDCMLKGSVEVAPRAGLADGICDLVSTGATLEANGLYETEVIYRSMACIIQSTQTQAPSKQALIDRILSRVNGVIRARESKYILLHAPTETLDQIVALLPGAENPTVLPLNDDTNRVAIHAVSTEDLFWDTMEQLTALGASSILVMPIEKMMG.

It belongs to the ATP phosphoribosyltransferase family. Long subfamily. It depends on Mg(2+) as a cofactor.

The protein resides in the cytoplasm. The catalysed reaction is 1-(5-phospho-beta-D-ribosyl)-ATP + diphosphate = 5-phospho-alpha-D-ribose 1-diphosphate + ATP. It functions in the pathway amino-acid biosynthesis; L-histidine biosynthesis; L-histidine from 5-phospho-alpha-D-ribose 1-diphosphate: step 1/9. Its activity is regulated as follows. Feedback inhibited by histidine. In terms of biological role, catalyzes the condensation of ATP and 5-phosphoribose 1-diphosphate to form N'-(5'-phosphoribosyl)-ATP (PR-ATP). Has a crucial role in the pathway because the rate of histidine biosynthesis seems to be controlled primarily by regulation of HisG enzymatic activity. The polypeptide is ATP phosphoribosyltransferase (Shewanella oneidensis (strain ATCC 700550 / JCM 31522 / CIP 106686 / LMG 19005 / NCIMB 14063 / MR-1)).